We begin with the raw amino-acid sequence, 134 residues long: Histone H2A (134 aa).

Over residues 1–11 (MTGGGKSGGKA) the composition is skewed to gly residues. The tract at residues 1–24 (MTGGGKSGGKASGSKNAQSRSSKA) is disordered. N6-acetyllysine is present on residues K6 and K10. Q107 carries the N5-methylglutamine modification.

The protein belongs to the histone H2A family. The nucleosome is a histone octamer containing two molecules each of H2A, H2B, H3 and H4 assembled in one H3-H4 heterotetramer and two H2A-H2B heterodimers. The octamer wraps approximately 147 bp of DNA. Post-translationally, acetylated by ESA1 to form H2AK4ac and H2AK7ac.

The protein resides in the nucleus. It localises to the chromosome. Core component of nucleosome. Nucleosomes wrap and compact DNA into chromatin, limiting DNA accessibility to the cellular machineries which require DNA as a template. Histones thereby play a central role in transcription regulation, DNA repair, DNA replication and chromosomal stability. DNA accessibility is regulated via a complex set of post-translational modifications of histones, also called histone code, and nucleosome remodeling. This chain is Histone H2A (HTA1), found in Gibberella zeae (strain ATCC MYA-4620 / CBS 123657 / FGSC 9075 / NRRL 31084 / PH-1) (Wheat head blight fungus).